Consider the following 299-residue polypeptide: tRNA dimethylallyltransferase (299 aa).

10-17 provides a ligand contact to ATP; it reads GPTASGKS. 12 to 17 contributes to the substrate binding site; sequence TASGKS.

Belongs to the IPP transferase family. In terms of assembly, monomer. It depends on Mg(2+) as a cofactor.

It catalyses the reaction adenosine(37) in tRNA + dimethylallyl diphosphate = N(6)-dimethylallyladenosine(37) in tRNA + diphosphate. Functionally, catalyzes the transfer of a dimethylallyl group onto the adenine at position 37 in tRNAs that read codons beginning with uridine, leading to the formation of N6-(dimethylallyl)adenosine (i(6)A). The chain is tRNA dimethylallyltransferase from Malacoplasma penetrans (strain HF-2) (Mycoplasma penetrans).